Consider the following 215-residue polypeptide: Pyrrolidone-carboxylate peptidase 1 (215 aa).

Active-site residues include Glu-80, Cys-143, and His-167.

This sequence belongs to the peptidase C15 family. As to quaternary structure, homotetramer.

The protein resides in the cytoplasm. The catalysed reaction is Release of an N-terminal pyroglutamyl group from a polypeptide, the second amino acid generally not being Pro.. Functionally, removes 5-oxoproline from various penultimate amino acid residues except L-proline. This chain is Pyrrolidone-carboxylate peptidase 1, found in Ralstonia nicotianae (strain ATCC BAA-1114 / GMI1000) (Ralstonia solanacearum).